Reading from the N-terminus, the 299-residue chain is GTPase Era (299 aa).

Residues 9–177 form the Era-type G domain; it reads RSGSVAVIGR…VGDLLKLVPE (169 aa). Positions 17-24 are G1; that stretch reads GRPNVGKS. A GTP-binding site is contributed by 17–24; sequence GRPNVGKS. The tract at residues 43–47 is G2; sequence QTTRH. Residues 64-67 are G3; the sequence is DTPG. GTP contacts are provided by residues 64–68 and 126–129; these read DTPGL and NKVD. Residues 126-129 are G4; that stretch reads NKVD. A G5 region spans residues 156–158; it reads VSA. The 85-residue stretch at 200-284 folds into the KH type-2 domain; that stretch reads VREQLMRQLG…FLETWVRVRE (85 aa).

This sequence belongs to the TRAFAC class TrmE-Era-EngA-EngB-Septin-like GTPase superfamily. Era GTPase family. Monomer.

It localises to the cytoplasm. It is found in the cell inner membrane. Its function is as follows. An essential GTPase that binds both GDP and GTP, with rapid nucleotide exchange. Plays a role in 16S rRNA processing and 30S ribosomal subunit biogenesis and possibly also in cell cycle regulation and energy metabolism. The polypeptide is GTPase Era (Xanthomonas axonopodis pv. citri (strain 306)).